Consider the following 243-residue polypeptide: Small ribosomal subunit protein uS3 (243 aa).

The 72-residue stretch at 39-110 folds into the KH type-2 domain; that stretch reads IRTFIEKKYG…QVRINVVEVE (72 aa). Residues 216–243 form a disordered region; it reads QTIPVGANPKRKASRRPQQFEDRSNENS. Over residues 233–243 the composition is skewed to basic and acidic residues; sequence QQFEDRSNENS.

This sequence belongs to the universal ribosomal protein uS3 family. In terms of assembly, part of the 30S ribosomal subunit. Forms a tight complex with proteins S10 and S14.

Its function is as follows. Binds the lower part of the 30S subunit head. Binds mRNA in the 70S ribosome, positioning it for translation. The chain is Small ribosomal subunit protein uS3 from Prochlorococcus marinus (strain MIT 9215).